Reading from the N-terminus, the 579-residue chain is Protein disulfide isomerase-like 1-3 (579 aa).

Residues 1–25 (MASSSTSISLLLFVSFILLLVNSRA) form the signal peptide. N-linked (GlcNAc...) asparagine glycosylation occurs at N27. Basic and acidic residues-rich tracts occupy residues 44–69 (EESKEQSHGGGSYHEEEHDHQHRDFE) and 80–89 (EFHHGDHGYE). The disordered stretch occupies residues 44-91 (EESKEQSHGGGSYHEEEHDHQHRDFENYDDLEQGGGEFHHGDHGYEEE). Residues 81–204 (FHHGDHGYEE…IVTWLKKKAS (124 aa)) form the Thioredoxin 1 domain. Residues N108 and N115 are each glycosylated (N-linked (GlcNAc...) asparagine). Catalysis depends on nucleophile residues C128 and C131. A disulfide bridge connects residues C128 and C131. N-linked (GlcNAc...) asparagine glycosylation is found at N209, N293, N313, and N338. Residues 416-546 (DFLADKLKPF…LYKFLKKHAS (131 aa)) form the Thioredoxin 2 domain. Catalysis depends on nucleophile residues C467 and C470. C467 and C470 are joined by a disulfide. N520 carries an N-linked (GlcNAc...) asparagine glycan. The segment at 558 to 579 (EPVISTMKSDEKIEGDSSKDEL) is disordered. Residues 565–579 (KSDEKIEGDSSKDEL) are compositionally biased toward basic and acidic residues. Positions 576–579 (KDEL) match the Prevents secretion from ER motif.

Belongs to the protein disulfide isomerase family. In terms of tissue distribution, widely expressed.

It localises to the endoplasmic reticulum lumen. The catalysed reaction is Catalyzes the rearrangement of -S-S- bonds in proteins.. In terms of biological role, acts as a protein-folding catalyst that interacts with nascent polypeptides to catalyze the formation, isomerization, and reduction or oxidation of disulfide bonds. This chain is Protein disulfide isomerase-like 1-3 (PDIL1-3), found in Arabidopsis thaliana (Mouse-ear cress).